A 135-amino-acid polypeptide reads, in one-letter code: Auxin-responsive protein SAUR66 (135 aa).

Belongs to the ARG7 family.

The protein resides in the cell membrane. Its function is as follows. May promote auxin-stimulated organ elongation, such as hypocotyls, stamen filaments and petals. This Arabidopsis thaliana (Mouse-ear cress) protein is Auxin-responsive protein SAUR66.